The chain runs to 842 residues: Netrin receptor UNC5A (842 aa).

Positions 1 to 25 (MAVRPGLWPALLGIVLAAWLRGSGA) are cleaved as a signal peptide. Residues 26–306 (QQSATVANPV…ASGPEDVALY (281 aa)) lie on the Extracellular side of the membrane. Residues 44–141 (PHFLVEPEDV…SGTTKSQKAY (98 aa)) enclose the Ig-like domain. Intrachain disulfides connect Cys65/Cys126, Cys77/Cys124, and Cys170/Cys221. Asn107 and Asn218 each carry an N-linked (GlcNAc...) asparagine glycan. The Ig-like C2-type domain maps to 155-234 (PLAKEVSLEQ…NIVARRRSAS (80 aa)). A TSP type-1 domain is found at 242–294 (DGSWSPWSKWSACGLDCTHWRSRECSDPAPRNGGEECQGTDLDTRNCTSDLCV). Residues Trp245, Trp248, and Trp251 are each glycosylated (C-linked (Man) tryptophan). Disulfide bonds link Cys254–Cys288, Cys258–Cys293, and Cys266–Cys278. The N-linked (GlcNAc...) asparagine glycan is linked to Asn287. Residues 307 to 327 (VGLIAVAVCLVLLLLVLILVY) form a helical membrane-spanning segment. Over 328–842 (CRKKEGLDSD…GLFTVSEAEC (515 aa)) the chain is Cytoplasmic. The region spanning 441–584 (NMTYGTFNFL…LGRFALVGEA (144 aa)) is the ZU5 domain. An interaction with DCC region spans residues 605–623 (SLEYNIRVYCLHDTHDALK). Residues 761–841 (QKIISSLDPP…AGLFTVSEAE (81 aa)) form the Death domain.

The protein belongs to the unc-5 family. As to quaternary structure, homodimer and homooligomer. Interacts with the cytoplasmic part of DCC. Interacts with MAGED1. Interacts with PRKCABP, possibly mediating some interaction with PKC. Interacts (via extracellular domain) with FLRT2 (via extracellular domain). Interacts (via extracellular domain) with FLRT3 (via extracellular domain). Post-translationally, phosphorylated on cytoplasmic tyrosine residues. Phosphorylated by PKC in vitro. Proteolytically cleaved by caspases during apoptosis. The cleavage does not take place when the receptor is associated with netrin ligand. Its cleavage by caspases is required to induce apoptosis. In terms of processing, the two extracellular TSRs of UNC5A contain WxxWxxWxxC motifs that can be C-mannosylated on all tryptophans. DPY19L1 preferentially mannosylates the first two tryptophans and DPY19L3 prefers the third. C-mannosylation by DPY19L1 is required for transport of UNC5A from the endoplasmic reticulum to the cell surface.

The protein resides in the cell membrane. It localises to the membrane raft. Its subcellular location is the cell projection. The protein localises to the neuron projection. Its function is as follows. Receptor for netrin required for axon guidance. Functions in the netrin signaling pathway and promotes neurite outgrowth in response to NTN1. Mediates axon repulsion of neuronal growth cones in the developing nervous system in response to netrin. Axon repulsion in growth cones may be mediated by its association with DCC that may trigger signaling for repulsion. It also acts as a dependence receptor required for apoptosis induction when not associated with netrin ligand. The chain is Netrin receptor UNC5A (UNC5A) from Homo sapiens (Human).